Consider the following 505-residue polypeptide: Peroxisome proliferator-activated receptor gamma (505 aa).

Residues 1-26 (MGETLGDSLIDPESDSFADTLSASTS) are disordered. Over residues 17–26 (FADTLSASTS) the composition is skewed to polar residues. Ser112 is modified (phosphoserine; by MAPK). A DNA-binding region (nuclear receptor) is located at residues 136–210 (AIECRVCGDK…VGMSHNAIRF (75 aa)). NR C4-type zinc fingers lie at residues 139–159 (CRVCGDKASGFHYGVHACEGC) and 176–198 (CDLNCRIHKKSRNKCQYCRFQKC). The interaction with FAM120B stretch occupies residues 205–280 (HNAIRFGRMP…DKSPFVIYDM (76 aa)). The NR LBD domain occupies 238–503 (DLRALAKHLY…HPLLQEIYKD (266 aa)). Residue Lys252 forms a Glycyl lysine isopeptide (Lys-Gly) (interchain with G-Cter in ubiquitin) linkage. Residues 495–503 (PLLQEIYKD) carry the 9aaTAD motif.

This sequence belongs to the nuclear hormone receptor family. NR1 subfamily. In terms of assembly, interacts with FOXO1 (acetylated form). Heterodimer with other nuclear receptors, such as RXRA. The heterodimer with the retinoic acid receptor RXRA is called adipocyte-specific transcription factor ARF6. Interacts with NCOA6 coactivator, leading to a strong increase in transcription of target genes. Interacts with coactivator PPARBP, leading to a mild increase in transcription of target genes. Interacts with NOCA7 in a ligand-inducible manner. Interacts with NCOA1 and NCOA2 LXXLL motifs. Interacts with ASXL1, ASXL2, DNTTIP2, FAM120B, MAP2K1/MEK1, NR0B2, PDPK1, PRDM16, PRMT2 and TGFB1I1. Interacts (when activated by agonist) with PPP5C. Interacts with HELZ2 and THRAP3; the interaction stimulates the transcriptional activity of PPARG. Interacts with PER2, the interaction is ligand dependent and blocks PPARG recruitment to target promoters. Interacts with NOCT. Interacts with ACTN4. Interacts (when in the liganded conformation) with GPS2. Interacts with CRY1 and CRY2 in a ligand-dependent manner. In the absence of hormonal ligand, interacts with TACC1. In macrophages, interacts with PAQR3 and STUB1; the interactions promote PPARG poylubiquitination and STUB1-mediated degradation. In terms of processing, phosphorylated at basal conditions and dephosphorylated when treated with the ligand. May be dephosphorylated by PPP5C. The phosphorylated form may be inactive and dephosphorylation induces adipogenic activity. Ubiquitinated by E3 ubiquitin-protein ligase complex containing FBXO9; leading to proteasomal degradation. Ubiquitinated at Lys-252 by TRIM55 leading to proteasomal degradation. Ubiquitinated by E3 ubiquitin-protein ligase STUB1/CHIP; leading to proteasomal degradation.

It is found in the nucleus. The protein localises to the cytoplasm. PDPK1 activates its transcriptional activity independently of its kinase activity. Nuclear receptor that binds peroxisome proliferators such as hypolipidemic drugs and fatty acids. Once activated by a ligand, the nuclear receptor binds to DNA specific PPAR response elements (PPRE) and modulates the transcription of its target genes, such as acyl-CoA oxidase. It therefore controls the peroxisomal beta-oxidation pathway of fatty acids. Key regulator of adipocyte differentiation and glucose homeostasis. ARF6 acts as a key regulator of the tissue-specific adipocyte P2 (aP2) enhancer. Acts as a critical regulator of gut homeostasis by suppressing NF-kappa-B-mediated pro-inflammatory responses. Plays a role in the regulation of cardiovascular circadian rhythms by regulating the transcription of BMAL1 in the blood vessels. In Canis lupus familiaris (Dog), this protein is Peroxisome proliferator-activated receptor gamma (PPARG).